Consider the following 396-residue polypeptide: L-lactate dehydrogenase (396 aa).

Residues 1–380 (MIISAASDYR…TQDSLVQGLG (380 aa)) enclose the FMN hydroxy acid dehydrogenase domain. Tyrosine 24 contributes to the substrate binding site. Residues serine 106 and glutamine 127 each coordinate FMN. Tyrosine 129 serves as a coordination point for substrate. Threonine 155 provides a ligand contact to FMN. Arginine 164 contacts substrate. Lysine 251 lines the FMN pocket. Histidine 275 acts as the Proton acceptor in catalysis. Arginine 278 is a substrate binding site. 306 to 330 (DSGIRNGLDVVRMIALGADTVLLGR) is a binding site for FMN.

The protein belongs to the FMN-dependent alpha-hydroxy acid dehydrogenase family. Requires FMN as cofactor.

Its subcellular location is the cell inner membrane. The enzyme catalyses (S)-lactate + A = pyruvate + AH2. Its function is as follows. Catalyzes the conversion of L-lactate to pyruvate. Is coupled to the respiratory chain. In Shigella dysenteriae serotype 1 (strain Sd197), this protein is L-lactate dehydrogenase.